Consider the following 314-residue polypeptide: DNA-directed RNA polymerase subunit alpha (314 aa).

The alpha N-terminal domain (alpha-NTD) stretch occupies residues 1 to 228 (MIEIEKPKIE…EHLNIFVGLT (228 aa)). Residues 245–314 (KEKVMEMTIE…DLGLGLRDDD (70 aa)) form an alpha C-terminal domain (alpha-CTD) region.

This sequence belongs to the RNA polymerase alpha chain family. In terms of assembly, homodimer. The RNAP catalytic core consists of 2 alpha, 1 beta, 1 beta' and 1 omega subunit. When a sigma factor is associated with the core the holoenzyme is formed, which can initiate transcription.

The catalysed reaction is RNA(n) + a ribonucleoside 5'-triphosphate = RNA(n+1) + diphosphate. DNA-dependent RNA polymerase catalyzes the transcription of DNA into RNA using the four ribonucleoside triphosphates as substrates. The protein is DNA-directed RNA polymerase subunit alpha of Oceanobacillus iheyensis (strain DSM 14371 / CIP 107618 / JCM 11309 / KCTC 3954 / HTE831).